The chain runs to 1320 residues: Poly [ADP-ribose] polymerase tankyrase-1 (1320 aa).

Residues 1–15 (MAASRRSQHHHHHHQ) show a composition bias toward basic residues. Disordered regions lie at residues 1 to 88 (MAAS…DGAV) and 111 to 152 (AGGG…AAGV). Over residues 25-46 (SAPPPPPPPPLSPGLAPGPTPA) the composition is skewed to pro residues. Over residues 69–82 (DGSRDPPDRPRSPD) the composition is skewed to basic and acidic residues. The segment covering 120-152 (NSASSASSPTSSSSSSPSSPGSSLAESPEAAGV) has biased composition (low complexity). ANK repeat units lie at residues 174-202 (GALR…NVNA), 208-237 (RKSS…NVHA), 241-270 (GGLI…DPNA), 274-303 (WNYT…DPNI), 361-390 (RKST…DVHA), 394-423 (GGLV…CVNA), 427-456 (WQFT…DPTL), 514-546 (SHET…NVNE), 550-579 (DFMT…KMNA), 583-612 (LGQT…DPSI), 676-705 (RHST…DVHA), 709-738 (GGLV…SVNV), 742-771 (WKFT…DPTK), 775-803 (DGNT…LLDA), 829-858 (RNST…DVNA), 862-891 (GGLI…CVNA), 895-924 (WAFT…DPTM), and 928-957 (EGQT…LPTC). Residues 1019–1082 (GLDMNISQFL…IKGVERLLGG (64 aa)) enclose the SAM domain. The region spanning 1105 to 1310 (APEDKEYQSV…YQIMKPEAPS (206 aa)) is the PARP catalytic domain. Cys-1227, His-1230, Cys-1235, and Cys-1238 together coordinate Zn(2+).

Belongs to the ARTD/PARP family. In terms of assembly, oligomerizes and associates with TNKS2. Interacts with the cytoplasmic domain of LNPEP/Otase in SLC2A4/GLUT4-vesicles. Binds to the N-terminus of telomeric TERF1 via the ANK repeats. Found in a complex with POT1; TERF1 and TINF2. Interacts with AXIN1. Interacts with AXIN2. Interacts with BLZF1 and CASC3. Interacts with NUMA1. Phosphorylated on serine residues by MAPK kinases upon insulin stimulation. Phosphorylated during mitosis. Post-translationally, ubiquitinated by RNF146 when auto-poly-ADP-ribosylated, leading to its degradation. In terms of processing, ADP-ribosylated (-auto). Poly-ADP-ribosylated protein is recognized by RNF146, followed by ubiquitination.

It localises to the cytoplasm. The protein localises to the golgi apparatus membrane. It is found in the cytoskeleton. The protein resides in the microtubule organizing center. Its subcellular location is the centrosome. It localises to the nucleus. The protein localises to the nuclear pore complex. It is found in the chromosome. The protein resides in the telomere. Its subcellular location is the spindle pole. The enzyme catalyses NAD(+) + (ADP-D-ribosyl)n-acceptor = nicotinamide + (ADP-D-ribosyl)n+1-acceptor + H(+).. The catalysed reaction is L-aspartyl-[protein] + NAD(+) = 4-O-(ADP-D-ribosyl)-L-aspartyl-[protein] + nicotinamide. It carries out the reaction L-glutamyl-[protein] + NAD(+) = 5-O-(ADP-D-ribosyl)-L-glutamyl-[protein] + nicotinamide. In terms of biological role, poly-ADP-ribosyltransferase involved in various processes such as Wnt signaling pathway, telomere length and vesicle trafficking. Acts as an activator of the Wnt signaling pathway by mediating poly-ADP-ribosylation (PARsylation) of AXIN1 and AXIN2, 2 key components of the beta-catenin destruction complex: poly-ADP-ribosylated target proteins are recognized by RNF146, which mediates their ubiquitination and subsequent degradation. Also mediates PARsylation of BLZF1 and CASC3, followed by recruitment of RNF146 and subsequent ubiquitination. Mediates PARsylation of TERF1, thereby contributing to the regulation of telomere length. Involved in centrosome maturation during prometaphase by mediating PARsylation of HEPACAM2/MIKI. May also regulate vesicle trafficking and modulate the subcellular distribution of SLC2A4/GLUT4-vesicles. May be involved in spindle pole assembly through PARsylation of NUMA1. Stimulates 26S proteasome activity. This Mus musculus (Mouse) protein is Poly [ADP-ribose] polymerase tankyrase-1 (Tnks).